The chain runs to 308 residues: Uridine diphosphate glucose pyrophosphatase NUDT22 (308 aa).

Positions 56, 86, 138, 143, 150, 155, and 157 each coordinate substrate. The region spanning 117 to 284 is the Nudix hydrolase domain; sequence ADPLGVGAAL…KGAILLYNRH (168 aa). A Nudix box motif is present at residues 174–195; that stretch reads GLLVVRELFSSVLQEICDEVNL. Mg(2+) is bound by residues Glu188 and Glu192. Position 273 (Ser273) interacts with substrate.

The protein belongs to the Nudix hydrolase family. The cofactor is Mg(2+).

The enzyme catalyses UDP-sugar + H2O = UMP + alpha-D-aldose 1-phosphate.. In terms of biological role, hydrolyzes UDP-glucose to glucose 1-phosphate and UMP and UDP-galactose to galactose 1-phosphate and UMP. Preferred substrate is UDP-glucose. In Mus musculus (Mouse), this protein is Uridine diphosphate glucose pyrophosphatase NUDT22 (Nudt22).